Here is a 322-residue protein sequence, read N- to C-terminus: Pantothenate kinase (322 aa).

104-111 (GSVAVGKS) is a binding site for ATP.

The protein belongs to the prokaryotic pantothenate kinase family.

The protein localises to the cytoplasm. It catalyses the reaction (R)-pantothenate + ATP = (R)-4'-phosphopantothenate + ADP + H(+). It participates in cofactor biosynthesis; coenzyme A biosynthesis; CoA from (R)-pantothenate: step 1/5. In Leifsonia xyli subsp. xyli (strain CTCB07), this protein is Pantothenate kinase.